The following is a 295-amino-acid chain: MNLRRRGIVVSFHSNMVTVEDEETGERILCKLRGKFRLQNLKIYVGDRVEYTPDETGSGVIENVLHRKNLLTKPHVANVDQVILVVTVKMPETSTYIIDKFLVLAEKNELETVMVINKMDLYDEDDLRKVRELEEIYSGLYPIVKTSAKTGMGIEELKEYLKGKISTMAGLSGVGKSSLLNAINPGLKLRVSEVSEKLQRGRHTTTTAQLLKFDFGGYVVDTPGFANLEINDIEPEELKHYFKEFGDKQCFFSDCNHVDEPECGVKEAVENGEIAESRYENYVKMFYELLGRRKK.

The CP-type G domain occupies 68–228 (KNLLTKPHVA…VVDTPGFANL (161 aa)). Residues 117–120 (NKMD) and 170–178 (GLSGVGKSS) each bind GTP. Positions 250, 255, 257, and 263 each coordinate Zn(2+).

Belongs to the TRAFAC class YlqF/YawG GTPase family. RsgA subfamily. Monomer. Associates with 30S ribosomal subunit, binds 16S rRNA. Zn(2+) serves as cofactor.

The protein localises to the cytoplasm. One of several proteins that assist in the late maturation steps of the functional core of the 30S ribosomal subunit. Helps release RbfA from mature subunits. May play a role in the assembly of ribosomal proteins into the subunit. Circularly permuted GTPase that catalyzes slow GTP hydrolysis, GTPase activity is stimulated by the 30S ribosomal subunit. The protein is Small ribosomal subunit biogenesis GTPase RsgA of Thermotoga maritima (strain ATCC 43589 / DSM 3109 / JCM 10099 / NBRC 100826 / MSB8).